We begin with the raw amino-acid sequence, 717 residues long: Catalase-peroxidase (717 aa).

Residues Met1–Lys20 form a disordered region. Residues Gly11–Lys20 show a composition bias toward polar residues. A cross-link (tryptophyl-tyrosyl-methioninium (Trp-Tyr) (with M-245)) is located at residues Trp91–Tyr219. The Proton acceptor role is filled by His92. The segment at residues Tyr219–Met245 is a cross-link (tryptophyl-tyrosyl-methioninium (Tyr-Met) (with W-91)). Position 260 (His260) interacts with heme b.

This sequence belongs to the peroxidase family. Peroxidase/catalase subfamily. As to quaternary structure, homodimer or homotetramer. Heme b is required as a cofactor. In terms of processing, formation of the three residue Trp-Tyr-Met cross-link is important for the catalase, but not the peroxidase activity of the enzyme.

It catalyses the reaction H2O2 + AH2 = A + 2 H2O. The catalysed reaction is 2 H2O2 = O2 + 2 H2O. Its function is as follows. Bifunctional enzyme with both catalase and broad-spectrum peroxidase activity. The protein is Catalase-peroxidase of Chromohalobacter salexigens (strain ATCC BAA-138 / DSM 3043 / CIP 106854 / NCIMB 13768 / 1H11).